The following is an 85-amino-acid chain: Alpha-insect toxin Bot14 (85 aa).

The N-terminal stretch at 1–18 (MSSLMISTAMKGKAPYRQ) is a signal peptide. The LCN-type CS-alpha/beta domain occupies 20-84 (RDGYIAQPHN…GIIVHGEKCH (65 aa)). 4 disulfide bridges follow: C30–C83, C34–C55, C41–C65, and C45–C67.

The protein belongs to the long (4 C-C) scorpion toxin superfamily. Sodium channel inhibitor family. Alpha subfamily. As to expression, expressed by the venom gland.

The protein localises to the secreted. In terms of biological role, alpha toxins bind voltage-independently at site-3 of sodium channels (Nav) and inhibit the inactivation of the activated channels, thereby blocking neuronal transmission. This toxin is active only on insects. The polypeptide is Alpha-insect toxin Bot14 (Buthus occitanus tunetanus (Common European scorpion)).